Consider the following 501-residue polypeptide: ATP synthase subunit alpha (501 aa).

169–176 (GDRQTGKT) contributes to the ATP binding site.

Belongs to the ATPase alpha/beta chains family. In terms of assembly, F-type ATPases have 2 components, CF(1) - the catalytic core - and CF(0) - the membrane proton channel. CF(1) has five subunits: alpha(3), beta(3), gamma(1), delta(1), epsilon(1). CF(0) has three main subunits: a(1), b(2) and c(9-12). The alpha and beta chains form an alternating ring which encloses part of the gamma chain. CF(1) is attached to CF(0) by a central stalk formed by the gamma and epsilon chains, while a peripheral stalk is formed by the delta and b chains.

It is found in the cell membrane. The enzyme catalyses ATP + H2O + 4 H(+)(in) = ADP + phosphate + 5 H(+)(out). Produces ATP from ADP in the presence of a proton gradient across the membrane. The alpha chain is a regulatory subunit. This chain is ATP synthase subunit alpha, found in Streptococcus equi subsp. zooepidemicus (strain H70).